A 391-amino-acid chain; its full sequence is Processive diacylglycerol beta-glucosyltransferase (391 aa).

Belongs to the glycosyltransferase 28 family. UgtP subfamily.

The protein resides in the cell membrane. It catalyses the reaction a 1,2-diacyl-3-O-(beta-D-glucopyranosyl)-sn-glycerol + UDP-alpha-D-glucose = a 1,2-diacyl-3-O-(beta-D-Glc-(1-&gt;6)-beta-D-Glc)-sn-glycerol + UDP + H(+). The catalysed reaction is a 1,2-diacyl-sn-glycerol + UDP-alpha-D-glucose = a 1,2-diacyl-3-O-(beta-D-glucopyranosyl)-sn-glycerol + UDP + H(+). The protein operates within glycolipid metabolism; diglucosyl-diacylglycerol biosynthesis. Functionally, processive glucosyltransferase involved in the biosynthesis of both the bilayer- and non-bilayer-forming membrane glucolipids. Is able to successively transfer two glucosyl residues to diacylglycerol (DAG), thereby catalyzing the formation of beta-monoglucosyl-DAG (3-O-(beta-D-glucopyranosyl)-1,2-diacyl-sn-glycerol) and beta-diglucosyl-DAG (3-O-(beta-D-glucopyranosyl-beta-(1-&gt;6)-D-glucopyranosyl)-1,2-diacyl-sn-glycerol). Beta-diglucosyl-DAG is the predominant glycolipid found in Bacillales and is also used as a membrane anchor for lipoteichoic acid (LTA). This Staphylococcus aureus (strain Mu3 / ATCC 700698) protein is Processive diacylglycerol beta-glucosyltransferase.